Consider the following 379-residue polypeptide: L-lactate dehydrogenase (379 aa).

The FMN hydroxy acid dehydrogenase domain occupies 1 to 379 (MIISSSTDYR…ITSELLVREP (379 aa)). Residue tyrosine 24 participates in substrate binding. FMN contacts are provided by serine 106 and glutamine 127. Residue tyrosine 129 coordinates substrate. Threonine 155 contacts FMN. Position 164 (arginine 164) interacts with substrate. Lysine 251 lines the FMN pocket. Histidine 275 serves as the catalytic Proton acceptor. Arginine 278 is a substrate binding site. 306 to 330 (DSGIRSGLDVVRMIALGADAAMLGR) is a binding site for FMN.

The protein belongs to the FMN-dependent alpha-hydroxy acid dehydrogenase family. It depends on FMN as a cofactor.

It localises to the cell membrane. It carries out the reaction (S)-lactate + A = pyruvate + AH2. Its function is as follows. Catalyzes the conversion of L-lactate to pyruvate. Is coupled to the respiratory chain. The sequence is that of L-lactate dehydrogenase from Alcaligenes faecalis.